The following is a 244-amino-acid chain: 5'-nucleotidase SurE (244 aa).

4 residues coordinate a divalent metal cation: D8, D9, S39, and N96.

The protein belongs to the SurE nucleotidase family. Requires a divalent metal cation as cofactor.

Its subcellular location is the cytoplasm. It catalyses the reaction a ribonucleoside 5'-phosphate + H2O = a ribonucleoside + phosphate. In terms of biological role, nucleotidase that shows phosphatase activity on nucleoside 5'-monophosphates. The chain is 5'-nucleotidase SurE from Thermus thermophilus (strain ATCC 27634 / DSM 579 / HB8).